A 66-amino-acid polypeptide reads, in one-letter code: Beta-toxin Cbo3 (66 aa).

The 66-residue stretch at 1–66 (KEGYIVNYHD…VWPLPKKTCN (66 aa)) folds into the LCN-type CS-alpha/beta domain. 4 disulfides stabilise this stretch: Cys-12–Cys-65, Cys-16–Cys-41, Cys-25–Cys-46, and Cys-29–Cys-48. Asparagine amide is present on Asn-66.

This sequence belongs to the long (4 C-C) scorpion toxin superfamily. Sodium channel inhibitor family. Beta subfamily. As to expression, expressed by the venom gland.

It is found in the secreted. Its function is as follows. Beta toxins bind voltage-independently at site-4 of sodium channels and shift the voltage of activation toward more negative potentials thereby affecting sodium channel activation and promoting spontaneous and repetitive firing. A mixture of Cbo2 and Cbo3 is weakly active on the human voltage-gated sodium channels Nav1.4/SCN4A and Nav1.6/SCN8A when tested at 200 nM. In vivo, is toxic to mice when intraperitoneally injected. The chain is Beta-toxin Cbo3 from Centruroides bonito (Scorpion).